A 142-amino-acid chain; its full sequence is Large ribosomal subunit protein uL13 (142 aa).

This sequence belongs to the universal ribosomal protein uL13 family. As to quaternary structure, part of the 50S ribosomal subunit.

Functionally, this protein is one of the early assembly proteins of the 50S ribosomal subunit, although it is not seen to bind rRNA by itself. It is important during the early stages of 50S assembly. This Azoarcus sp. (strain BH72) protein is Large ribosomal subunit protein uL13.